A 199-amino-acid polypeptide reads, in one-letter code: Probable nicotinate-nucleotide adenylyltransferase (199 aa).

The protein belongs to the NadD family.

It catalyses the reaction nicotinate beta-D-ribonucleotide + ATP + H(+) = deamido-NAD(+) + diphosphate. Its pathway is cofactor biosynthesis; NAD(+) biosynthesis; deamido-NAD(+) from nicotinate D-ribonucleotide: step 1/1. Its function is as follows. Catalyzes the reversible adenylation of nicotinate mononucleotide (NaMN) to nicotinic acid adenine dinucleotide (NaAD). This is Probable nicotinate-nucleotide adenylyltransferase from Roseiflexus castenholzii (strain DSM 13941 / HLO8).